The chain runs to 136 residues: ATP synthase epsilon chain, chloroplastic (136 aa).

This sequence belongs to the ATPase epsilon chain family. As to quaternary structure, F-type ATPases have 2 components, CF(1) - the catalytic core - and CF(0) - the membrane proton channel. CF(1) has five subunits: alpha(3), beta(3), gamma(1), delta(1), epsilon(1). CF(0) has three main subunits: a, b and c.

The protein localises to the plastid. It localises to the chloroplast thylakoid membrane. In terms of biological role, produces ATP from ADP in the presence of a proton gradient across the membrane. The polypeptide is ATP synthase epsilon chain, chloroplastic (Chaetosphaeridium globosum (Charophycean green alga)).